A 118-amino-acid polypeptide reads, in one-letter code: Large ribosomal subunit protein bL19 (118 aa).

This sequence belongs to the bacterial ribosomal protein bL19 family.

This protein is located at the 30S-50S ribosomal subunit interface and may play a role in the structure and function of the aminoacyl-tRNA binding site. This is Large ribosomal subunit protein bL19 from Dictyoglomus thermophilum (strain ATCC 35947 / DSM 3960 / H-6-12).